We begin with the raw amino-acid sequence, 106 residues long: Urease subunit beta (106 aa).

It belongs to the urease beta subunit family. In terms of assembly, heterotrimer of UreA (gamma), UreB (beta) and UreC (alpha) subunits. Three heterotrimers associate to form the active enzyme.

The protein resides in the cytoplasm. The enzyme catalyses urea + 2 H2O + H(+) = hydrogencarbonate + 2 NH4(+). Its pathway is nitrogen metabolism; urea degradation; CO(2) and NH(3) from urea (urease route): step 1/1. This is Urease subunit beta from Prochlorococcus marinus (strain MIT 9215).